Reading from the N-terminus, the 359-residue chain is Peptide chain release factor 1 (359 aa).

Q235 carries the post-translational modification N5-methylglutamine. The tract at residues 284–311 (KAESERSASRKNQVGSGDRSERIRTYNF) is disordered.

The protein belongs to the prokaryotic/mitochondrial release factor family. Methylated by PrmC. Methylation increases the termination efficiency of RF1.

The protein resides in the cytoplasm. Peptide chain release factor 1 directs the termination of translation in response to the peptide chain termination codons UAG and UAA. In Bartonella quintana (strain Toulouse) (Rochalimaea quintana), this protein is Peptide chain release factor 1.